The following is an 839-amino-acid chain: Molybdenum cofactor sulfurase (839 aa).

The residue at position 237 (K237) is an N6-(pyridoxal phosphate)lysine. C401 is an active-site residue. The span at 651–662 shows a compositional bias: polar residues; sequence DQNYSQKQSPSM. Residues 651–678 form a disordered region; it reads DQNYSQKQSPSMPGSFPQAPSSPDPYPT. One can recognise an MOSC domain in the interval 656 to 834; sequence QKQSPSMPGS…IMVGDAVTPS (179 aa).

Belongs to the class-V pyridoxal-phosphate-dependent aminotransferase family. MOCOS subfamily. Pyridoxal 5'-phosphate serves as cofactor.

The enzyme catalyses Mo-molybdopterin + L-cysteine + AH2 = thio-Mo-molybdopterin + L-alanine + A + H2O. It participates in cofactor biosynthesis; molybdopterin biosynthesis. Functionally, sulfurates the molybdenum cofactor. Sulfation of molybdenum is essential for xanthine dehydrogenase (XDH) and aldehyde oxidase (ADO) enzymes in which molybdenum cofactor is liganded by 1 oxygen and 1 sulfur atom in active form. In Emericella nidulans (strain FGSC A4 / ATCC 38163 / CBS 112.46 / NRRL 194 / M139) (Aspergillus nidulans), this protein is Molybdenum cofactor sulfurase.